A 399-amino-acid polypeptide reads, in one-letter code: Phosphoglycerate kinase (399 aa).

Residues Asp22–Asn24, Arg37, His60–Arg63, Arg119, and Arg152 contribute to the substrate site. ATP contacts are provided by residues Lys202, Glu324, and Gly354 to Thr357.

It belongs to the phosphoglycerate kinase family. In terms of assembly, monomer.

It is found in the cytoplasm. It carries out the reaction (2R)-3-phosphoglycerate + ATP = (2R)-3-phospho-glyceroyl phosphate + ADP. Its pathway is carbohydrate degradation; glycolysis; pyruvate from D-glyceraldehyde 3-phosphate: step 2/5. The chain is Phosphoglycerate kinase from Sinorhizobium fredii (strain NBRC 101917 / NGR234).